We begin with the raw amino-acid sequence, 207 residues long: Serotype 2 fimbrial subunit (207 aa).

The signal sequence occupies residues 1–26; that stretch reads MQIPFQRALRLCLRAALAAIASAAHA. Residues Cys42 and Cys85 are joined by a disulfide bond.

This sequence belongs to the fimbrial protein family.

The protein resides in the fimbrium. Bordetella pertussis is the causative agent of whooping cough. An essential step in the disease process is the attachment of the bacteria to the ciliated epithelium of the respiratory tract, enabling the organism to resist normal host-clearance mechanisms. It is unclear which bacterial cell surface component are responsible for adherence but the fimbriae of B.pertussis are prime candidates for being involved in this process. The sequence is that of Serotype 2 fimbrial subunit (fim2) from Bordetella pertussis (strain Tohama I / ATCC BAA-589 / NCTC 13251).